Consider the following 187-residue polypeptide: Ribosome-recycling factor (187 aa).

Belongs to the RRF family.

The protein localises to the cytoplasm. Its function is as follows. Responsible for the release of ribosomes from messenger RNA at the termination of protein biosynthesis. May increase the efficiency of translation by recycling ribosomes from one round of translation to another. This is Ribosome-recycling factor from Parvibaculum lavamentivorans (strain DS-1 / DSM 13023 / NCIMB 13966).